The primary structure comprises 296 residues: 4-hydroxybenzoate octaprenyltransferase (296 aa).

8 helical membrane-spanning segments follow: residues 29–49 (IGVY…GKGA), 52–72 (LQTV…GCVI), 102–122 (ALVL…FTNA), 146–166 (YYPQ…AFTA), 169–189 (GELP…TVGY), 219–239 (VIIL…GARF), 241–261 (LGAC…WEFW), and 275–295 (FLHN…DYAV).

The protein belongs to the UbiA prenyltransferase family. The cofactor is Mg(2+).

It localises to the cell inner membrane. It carries out the reaction all-trans-octaprenyl diphosphate + 4-hydroxybenzoate = 4-hydroxy-3-(all-trans-octaprenyl)benzoate + diphosphate. It participates in cofactor biosynthesis; ubiquinone biosynthesis. Catalyzes the prenylation of para-hydroxybenzoate (PHB) with an all-trans polyprenyl group. Mediates the second step in the final reaction sequence of ubiquinone-8 (UQ-8) biosynthesis, which is the condensation of the polyisoprenoid side chain with PHB, generating the first membrane-bound Q intermediate 3-octaprenyl-4-hydroxybenzoate. This chain is 4-hydroxybenzoate octaprenyltransferase, found in Pseudomonas syringae pv. syringae (strain B728a).